A 206-amino-acid polypeptide reads, in one-letter code: MIFRVNLLFSCFCFVLFVFDFSNASKYDQGSLNIAKRLWRDWEREANAKDMERKEVKADAEGNAQMERERRLWRDWEASQAKPLERRAWVEAVEASDQNEREKRLWRDWEGNQANDLERRAMEGLMEANEENQRAKRLWRNWEANHEYEIERKRDLPELKRRKRLWRNEDQEVACTTKCSCSDNEIFSKVDHELTTSETKRVPCCC.

Positions 1–24 are cleaved as a signal peptide; sequence MIFRVNLLFSCFCFVLFVFDFSNA. Positions 25 to 164 are excised as a propeptide; the sequence is SKYDQGSLNI…DLPELKRRKR (140 aa). The stretch at 37-43 is one RLWRNWE 1; approximate repeat; it reads RLWRDWE. An RLWRNWE 2; approximate repeat occupies 71–77; that stretch reads RLWRDWE. An RLWRNWE 3; approximate repeat occupies 104–110; that stretch reads RLWRDWE. The RLWRNWE 4 repeat unit spans residues 137–143; sequence RLWRNWE. One copy of the RLWRNWE 5; approximate repeat lies at 164–170; sequence RLWRNED.

It belongs to the scoloptoxin-08 family. In terms of processing, contains 3 disulfide bonds. As to expression, expressed by the venom gland.

Its subcellular location is the secreted. This Cormocephalus westwoodi (Westwood's green centipede) protein is U-scoloptoxin(08)-Cw1a.